The following is a 425-amino-acid chain: UDP-N-acetylglucosamine 1-carboxyvinyltransferase (425 aa).

22 to 23 contacts phosphoenolpyruvate; that stretch reads KN. Residue arginine 98 coordinates UDP-N-acetyl-alpha-D-glucosamine. The active-site Proton donor is cysteine 122. At cysteine 122 the chain carries 2-(S-cysteinyl)pyruvic acid O-phosphothioketal. UDP-N-acetyl-alpha-D-glucosamine is bound by residues 127–131, aspartate 313, and isoleucine 335; that span reads RPVDQ.

The protein belongs to the EPSP synthase family. MurA subfamily.

It is found in the cytoplasm. It catalyses the reaction phosphoenolpyruvate + UDP-N-acetyl-alpha-D-glucosamine = UDP-N-acetyl-3-O-(1-carboxyvinyl)-alpha-D-glucosamine + phosphate. It functions in the pathway cell wall biogenesis; peptidoglycan biosynthesis. Functionally, cell wall formation. Adds enolpyruvyl to UDP-N-acetylglucosamine. The polypeptide is UDP-N-acetylglucosamine 1-carboxyvinyltransferase (Xylella fastidiosa (strain M12)).